Here is a 163-residue protein sequence, read N- to C-terminus: NADH-quinone oxidoreductase subunit I (163 aa).

4Fe-4S ferredoxin-type domains follow at residues 53–83 and 94–123; these read LRRY…IEAG and VRYD…EGPN. The [4Fe-4S] cluster site is built by C63, C66, C69, C73, C103, C106, C109, and C113.

The protein belongs to the complex I 23 kDa subunit family. As to quaternary structure, NDH-1 is composed of 14 different subunits. Subunits NuoA, H, J, K, L, M, N constitute the membrane sector of the complex. Requires [4Fe-4S] cluster as cofactor.

The protein resides in the cell inner membrane. The enzyme catalyses a quinone + NADH + 5 H(+)(in) = a quinol + NAD(+) + 4 H(+)(out). NDH-1 shuttles electrons from NADH, via FMN and iron-sulfur (Fe-S) centers, to quinones in the respiratory chain. The immediate electron acceptor for the enzyme in this species is believed to be ubiquinone. Couples the redox reaction to proton translocation (for every two electrons transferred, four hydrogen ions are translocated across the cytoplasmic membrane), and thus conserves the redox energy in a proton gradient. In Bartonella quintana (strain Toulouse) (Rochalimaea quintana), this protein is NADH-quinone oxidoreductase subunit I.